The chain runs to 380 residues: Transporter PPE51 (380 aa).

Residue Met-1 is modified to N-acetylmethionine.

It belongs to the mycobacterial PPE family. Interacts with PE19 and PE25.

The protein localises to the cell outer membrane. Small molecule-selective channel required for the uptake of nutrients across the outer mycomembrane. Transports glycerol and glucose. Involved in sensitivity to M.tuberculosis growth inhibitory agrichemical 3,3-bis-di(methylsulfonyl)propionamide (3bMP1). Transports maltose and lactose disaccharides. Involved in sensitivity to bactericidal thio-disaccharide T-6 compound (1,6-anhydro-3-deoxy-4-S-(2,3,4,6-tetra-O-acetyl-beta-D-glucopyranosyl)-D-glycero-hexopyranos-2-ulose). Transports extracellular trehalose, a component of the cell envelope, and trehalose analog, 6-azido trehalose (6-TreAz), which has antimycobacterial activity. In terms of biological role, plays a role in response to starvation and stress, likely environment within the host. Inhibits canonical autophagy in infected mouse RAW264.7 macrophages. Inhibits autophagy and enhances intracellular bacterial survival when expressed in human macrophage-like THP-1 cells. Inhibits Toll-like receptor 2 (TLR2)-dependent signaling leading to autophagy inhibition, increased intracellular bacterial survival, reduced phagocytosis and reduced secretion of interleukin 6 (IL-6) and IL-1 in infected mouse primary bone marrow-derived macrophage (BMDM) cells. Required for virulence and persistence in the lungs and spleens of intranasally infected C57BL/6J mice. Blocks the antibacterial effects of TLR2 activation, suppresses MHC class II-dependent antigen presentation, and reduces IFN-gamma and TNF-alpha-producing CD4(+) T cells during infection in C57BL/6J mice. The sequence is that of Transporter PPE51 (PPE51) from Mycobacterium tuberculosis (strain CDC 1551 / Oshkosh).